Reading from the N-terminus, the 268-residue chain is MTEQFQHRARKRFGQNFLHDAGVIDKILRAIRAKPEDRLLEIGPGQGALTEGLLNSGAQLDVVELDKDLIPILNSQFASQPNFNLHQGDALKFDFNTLGAEPRSLRVVGNLPYNISTPLIFHLLQNASLIRDMHFMLQKEVVERMAAGPGGGDWGRLSIMVQYHCRVEHLFNVGPGAFNPPPKVDSAIVRLVPYETLPHPAKDHRVLERVVREAFNQRRKTLRNTLKLLLSSDEITASGVDGSLRPEQLDLAAFVRLADTLSEKVLTE.

The S-adenosyl-L-methionine site is built by N16, L18, G43, E64, D89, and N110.

The protein belongs to the class I-like SAM-binding methyltransferase superfamily. rRNA adenine N(6)-methyltransferase family. RsmA subfamily.

Its subcellular location is the cytoplasm. It catalyses the reaction adenosine(1518)/adenosine(1519) in 16S rRNA + 4 S-adenosyl-L-methionine = N(6)-dimethyladenosine(1518)/N(6)-dimethyladenosine(1519) in 16S rRNA + 4 S-adenosyl-L-homocysteine + 4 H(+). Functionally, specifically dimethylates two adjacent adenosines (A1518 and A1519) in the loop of a conserved hairpin near the 3'-end of 16S rRNA in the 30S particle. May play a critical role in biogenesis of 30S subunits. This Pseudomonas syringae pv. tomato (strain ATCC BAA-871 / DC3000) protein is Ribosomal RNA small subunit methyltransferase A.